The sequence spans 157 residues: Arginine repressor (157 aa).

It belongs to the ArgR family.

Its subcellular location is the cytoplasm. It functions in the pathway amino-acid biosynthesis; L-arginine biosynthesis [regulation]. Regulates arginine biosynthesis genes. The sequence is that of Arginine repressor from Bacteroides thetaiotaomicron (strain ATCC 29148 / DSM 2079 / JCM 5827 / CCUG 10774 / NCTC 10582 / VPI-5482 / E50).